The sequence spans 258 residues: NAD kinase (258 aa).

Catalysis depends on aspartate 51, which acts as the Proton acceptor. NAD(+)-binding positions include 51–52 (DG), 119–120 (ND), lysine 130, aspartate 149, 160–165 (TAYSLS), and alanine 184.

Belongs to the NAD kinase family. In terms of assembly, homodimer. The cofactor is a divalent metal cation.

Its subcellular location is the cytoplasm. It carries out the reaction NAD(+) + ATP = ADP + NADP(+) + H(+). Functionally, involved in the regulation of the intracellular balance between NAD(H) and NADP(H), and is a key enzyme in the biosynthesis of NADP. Catalyzes specifically the phosphorylation on 2'-hydroxyl of the adenosine moiety of NAD to yield NADP. The protein is NAD kinase (NADK) of Thermotoga maritima (strain ATCC 43589 / DSM 3109 / JCM 10099 / NBRC 100826 / MSB8).